The following is a 263-amino-acid chain: Expansin-like A3 (263 aa).

An N-terminal signal peptide occupies residues 1-20 (MRSFLYLIVVIFLFSSSVNA). The 107-residue stretch at 41 to 147 (SGACAYGPMA…QRVPCNYGKR (107 aa)) folds into the Expansin-like EG45 domain. Asparagine 99 and asparagine 102 each carry an N-linked (GlcNAc...) asparagine glycan. Residues 161–243 (NYLAIKLLYQ…NWNSGRIYDA (83 aa)) enclose the Expansin-like CBD domain.

Belongs to the expansin family. Expansin-like A subfamily.

It localises to the secreted. The protein is Expansin-like A3 (EXLA3) of Arabidopsis thaliana (Mouse-ear cress).